The primary structure comprises 87 residues: Small ribosomal subunit protein bS18 (87 aa).

Over residues 1–10 the composition is skewed to basic and acidic residues; the sequence is MAGKSSGDRR. A disordered region spans residues 1-23; the sequence is MAGKSSGDRRKPLRGAKGGKNAA.

It belongs to the bacterial ribosomal protein bS18 family. Part of the 30S ribosomal subunit. Forms a tight heterodimer with protein bS6.

In terms of biological role, binds as a heterodimer with protein bS6 to the central domain of the 16S rRNA, where it helps stabilize the platform of the 30S subunit. This Clavibacter michiganensis subsp. michiganensis (strain NCPPB 382) protein is Small ribosomal subunit protein bS18.